The chain runs to 203 residues: Orotate phosphoribosyltransferase (203 aa).

Residues R94, K95, K98, H100, and 119 to 127 contribute to the 5-phospho-alpha-D-ribose 1-diphosphate site; that span reads DDVATTGGS. The orotate site is built by T123 and R151.

This sequence belongs to the purine/pyrimidine phosphoribosyltransferase family. PyrE subfamily. In terms of assembly, homodimer. Requires Mg(2+) as cofactor.

It catalyses the reaction orotidine 5'-phosphate + diphosphate = orotate + 5-phospho-alpha-D-ribose 1-diphosphate. The protein operates within pyrimidine metabolism; UMP biosynthesis via de novo pathway; UMP from orotate: step 1/2. Functionally, catalyzes the transfer of a ribosyl phosphate group from 5-phosphoribose 1-diphosphate to orotate, leading to the formation of orotidine monophosphate (OMP). This chain is Orotate phosphoribosyltransferase, found in Staphylothermus marinus (strain ATCC 43588 / DSM 3639 / JCM 9404 / F1).